The following is a 1409-amino-acid chain: DNA-directed RNA polymerase subunit beta' (1409 aa).

Zn(2+) is bound by residues Cys70, Cys72, Cys85, and Cys88. 3 residues coordinate Mg(2+): Asp460, Asp462, and Asp464. Cys814, Cys888, Cys895, and Cys898 together coordinate Zn(2+).

Belongs to the RNA polymerase beta' chain family. In terms of assembly, the RNAP catalytic core consists of 2 alpha, 1 beta, 1 beta' and 1 omega subunit. When a sigma factor is associated with the core the holoenzyme is formed, which can initiate transcription. Mg(2+) serves as cofactor. The cofactor is Zn(2+).

It carries out the reaction RNA(n) + a ribonucleoside 5'-triphosphate = RNA(n+1) + diphosphate. DNA-dependent RNA polymerase catalyzes the transcription of DNA into RNA using the four ribonucleoside triphosphates as substrates. The polypeptide is DNA-directed RNA polymerase subunit beta' (Shewanella violacea).